A 304-amino-acid polypeptide reads, in one-letter code: MRKQKMNRDWIATARTLSEALPYMQRYSGAVVVVKFGGNAMGDDEAMAEFARDIVLMKQVGIHPVVCHGGGPMINDLLGKLGIESRFVRGKRVTTRETVEVVEMVLSGLVNKRIVQAINDAGGRAVGISGKDDDLMVCEPDDPELGFVGRPVEMNVQIIRDLYNAGLIPVIAPVATGMEDNETFNVNGDTAAGAIAGALRADRLLLLTDVAGVKDASGEVLTAMHPDQVRAMIADGTIAGGMIPKTETALKALDEGVRAVVILDGRVPNACLLELFTEHGAGSLIRSTEPRVKPRGLRQGDSGL.

Residues 70-71 (GG), R92, and N185 contribute to the substrate site.

Belongs to the acetylglutamate kinase family. ArgB subfamily.

It is found in the cytoplasm. It catalyses the reaction N-acetyl-L-glutamate + ATP = N-acetyl-L-glutamyl 5-phosphate + ADP. Its pathway is amino-acid biosynthesis; L-arginine biosynthesis; N(2)-acetyl-L-ornithine from L-glutamate: step 2/4. Its function is as follows. Catalyzes the ATP-dependent phosphorylation of N-acetyl-L-glutamate. This Paracoccus denitrificans (strain Pd 1222) protein is Acetylglutamate kinase.